A 622-amino-acid polypeptide reads, in one-letter code: Low affinity potassium transport system protein Kup (622 aa).

Helical transmembrane passes span 9 to 29 (LPAITLAAIGVVYGDIGTSPL), 49 to 69 (VFGFLSLIFWLLIFVVSIKYL), 103 to 123 (VIMGLIGGSFFYGEVVITPAI), 137 to 157 (PQLDTWIVPLSIIVLTLLFMI), 165 to 185 (VGKLFAPIMLTWFLILAGLGL), 213 to 233 (VSFIALGAVVLSITGVEALYA), 247 to 267 (WFTVVLPSLTLNYFGQGALLL), 276 to 296 (PFFLLAPDWALIPLLIIAALA), 337 to 357 (IYIPFVNWMLYVAVVIVIVSF), 363 to 383 (LAAAYGIAVTGTMVLTSILST), 396 to 416 (FVALILIAFLCVDIPLFTANL), and 419 to 439 (LLSGGWLPLSLGTVMFIVMTT).

The protein belongs to the HAK/KUP transporter (TC 2.A.72) family.

The protein localises to the cell inner membrane. It carries out the reaction K(+)(in) + H(+)(in) = K(+)(out) + H(+)(out). Its function is as follows. Responsible for the low-affinity transport of potassium into the cell. Likely operates as a K(+):H(+) symporter. This Escherichia fergusonii (strain ATCC 35469 / DSM 13698 / CCUG 18766 / IAM 14443 / JCM 21226 / LMG 7866 / NBRC 102419 / NCTC 12128 / CDC 0568-73) protein is Low affinity potassium transport system protein Kup.